Consider the following 462-residue polypeptide: Argininosuccinate lyase (462 aa).

Belongs to the lyase 1 family. Argininosuccinate lyase subfamily.

It localises to the cytoplasm. The catalysed reaction is 2-(N(omega)-L-arginino)succinate = fumarate + L-arginine. It participates in amino-acid biosynthesis; L-arginine biosynthesis; L-arginine from L-ornithine and carbamoyl phosphate: step 3/3. The polypeptide is Argininosuccinate lyase (Nitratiruptor sp. (strain SB155-2)).